The sequence spans 27 residues: ARRRRRHASTKLKRRRRRRRHGKKSHK.

The disordered stretch occupies residues 1 to 27; that stretch reads ARRRRRHASTKLKRRRRRRRHGKKSHK.

Testis.

It is found in the nucleus. It localises to the chromosome. Protamines substitute for histones in the chromatin of sperm during the haploid phase of spermatogenesis. They compact sperm DNA into a highly condensed, stable and inactive complex. This chain is Protamine-A, found in Acipenser stellatus (Sevruga).